We begin with the raw amino-acid sequence, 470 residues long: Mucin-like protein 3 (470 aa).

The N-terminal stretch at 1-29 is a signal peptide; the sequence is MAQMTSGLYPMFGFFICLLFLPASWEAGA. Residues 30 to 401 are Extracellular-facing; it reads NTFQELQKTG…EGSNSFPAWA (372 aa). 2 disordered regions span residues 57–234 and 248–318; these read RALS…HTIP and TKEA…KAPE. Residues 75–87 show a composition bias toward polar residues; it reads STATQKPKRQCNT. Asparagine 122 is a glycosylation site (N-linked (GlcNAc...) asparagine). Residues 132–152 show a composition bias toward basic and acidic residues; it reads ARNERSADDHGSTNSEKRSDG. A compositionally biased stretch (polar residues) spans 169–193; it reads TRTSGTPVSSTETSTKLRTTSQKPE. The span at 194–203 shows a compositional bias: basic and acidic residues; the sequence is TSSHDSDLIR. Residues 204–222 show a composition bias toward polar residues; sequence KSTSLPVKSTEVSRTSYRT. Over residues 260–273 the composition is skewed to basic and acidic residues; sequence KYERETRSASERIS. Over residues 283–295 the composition is skewed to polar residues; that stretch reads HTPSAGETTTQVS. N-linked (GlcNAc...) asparagine glycosylation is present at asparagine 325. A helical membrane pass occupies residues 402–422; it reads IVVVILMAVIILLIFLGLIFL. Topologically, residues 423 to 470 are cytoplasmic; that stretch reads VSCASRARHQLTQNSEDAEPEDKGGRNSYPVYLMEQQNLNLNQISSPP.

The protein localises to the cell membrane. It localises to the cytoplasm. Functionally, may modulate NF-kappaB signaling and play a role in cell growth. This Rattus norvegicus (Rat) protein is Mucin-like protein 3.